Here is a 422-residue protein sequence, read N- to C-terminus: S-adenosylmethionine synthase (422 aa).

Histidine 16 contacts ATP. Aspartate 18 lines the Mg(2+) pocket. Glutamate 44 contacts K(+). Positions 57 and 100 each coordinate L-methionine. The tract at residues glutamine 100–alanine 110 is flexible loop. ATP is bound by residues aspartate 175–lysine 177, lysine 251–phenylalanine 252, aspartate 260, arginine 266–lysine 267, alanine 283, and lysine 287. Aspartate 260 contacts L-methionine. Lysine 291 contributes to the L-methionine binding site.

This sequence belongs to the AdoMet synthase family. Homotetramer; dimer of dimers. Mg(2+) is required as a cofactor. K(+) serves as cofactor.

The protein localises to the cytoplasm. The catalysed reaction is L-methionine + ATP + H2O = S-adenosyl-L-methionine + phosphate + diphosphate. It functions in the pathway amino-acid biosynthesis; S-adenosyl-L-methionine biosynthesis; S-adenosyl-L-methionine from L-methionine: step 1/1. Catalyzes the formation of S-adenosylmethionine (AdoMet) from methionine and ATP. The overall synthetic reaction is composed of two sequential steps, AdoMet formation and the subsequent tripolyphosphate hydrolysis which occurs prior to release of AdoMet from the enzyme. The chain is S-adenosylmethionine synthase from Rippkaea orientalis (strain PCC 8801 / RF-1) (Cyanothece sp. (strain PCC 8801)).